The primary structure comprises 570 residues: Proline--tRNA ligase (570 aa).

The protein belongs to the class-II aminoacyl-tRNA synthetase family. ProS type 1 subfamily. As to quaternary structure, homodimer.

The protein resides in the cytoplasm. It carries out the reaction tRNA(Pro) + L-proline + ATP = L-prolyl-tRNA(Pro) + AMP + diphosphate. Catalyzes the attachment of proline to tRNA(Pro) in a two-step reaction: proline is first activated by ATP to form Pro-AMP and then transferred to the acceptor end of tRNA(Pro). As ProRS can inadvertently accommodate and process non-cognate amino acids such as alanine and cysteine, to avoid such errors it has two additional distinct editing activities against alanine. One activity is designated as 'pretransfer' editing and involves the tRNA(Pro)-independent hydrolysis of activated Ala-AMP. The other activity is designated 'posttransfer' editing and involves deacylation of mischarged Ala-tRNA(Pro). The misacylated Cys-tRNA(Pro) is not edited by ProRS. This is Proline--tRNA ligase from Neisseria gonorrhoeae (strain ATCC 700825 / FA 1090).